Reading from the N-terminus, the 167-residue chain is Pathogenesis-related protein PR-1 type (167 aa).

Positions 1 to 29 are cleaved as a signal peptide; that stretch reads MAHNHWCNLFSVALVCVVALVMVQYSVAQ. The SCP domain occupies 36-155; sequence VDAHNAARSA…NGAWFITCNY (120 aa). Disulfide bonds link Cys72–Cys144, Cys117–Cys123, and Cys139–Cys153.

This sequence belongs to the CRISP family.

Its function is as follows. Probably involved in the defense reaction of plants against pathogens. This Sambucus nigra (European elder) protein is Pathogenesis-related protein PR-1 type.